Consider the following 256-residue polypeptide: Pimeloyl-[acyl-carrier protein] methyl ester esterase (256 aa).

One can recognise an AB hydrolase-1 domain in the interval 15–242; the sequence is HLVLLHGWGL…AAHAPFISHP (228 aa). Substrate contacts are provided by residues W22, 82-83, and 143-147; these read SL and FLALQ. Catalysis depends on S82, which acts as the Nucleophile. Active-site residues include D207 and H235. H235 is a binding site for substrate.

Belongs to the AB hydrolase superfamily. Carboxylesterase BioH family. In terms of assembly, monomer.

Its subcellular location is the cytoplasm. The catalysed reaction is 6-carboxyhexanoyl-[ACP] methyl ester + H2O = 6-carboxyhexanoyl-[ACP] + methanol + H(+). Its pathway is cofactor biosynthesis; biotin biosynthesis. Functionally, the physiological role of BioH is to remove the methyl group introduced by BioC when the pimeloyl moiety is complete. It allows to synthesize pimeloyl-ACP via the fatty acid synthetic pathway through the hydrolysis of the ester bonds of pimeloyl-ACP esters. This is Pimeloyl-[acyl-carrier protein] methyl ester esterase from Escherichia fergusonii (strain ATCC 35469 / DSM 13698 / CCUG 18766 / IAM 14443 / JCM 21226 / LMG 7866 / NBRC 102419 / NCTC 12128 / CDC 0568-73).